Consider the following 189-residue polypeptide: Peptidyl-tRNA hydrolase (189 aa).

Y15 is a binding site for tRNA. The Proton acceptor role is filled by H20. Residues F66, N68, and N114 each coordinate tRNA.

It belongs to the PTH family. Monomer.

Its subcellular location is the cytoplasm. It carries out the reaction an N-acyl-L-alpha-aminoacyl-tRNA + H2O = an N-acyl-L-amino acid + a tRNA + H(+). Hydrolyzes ribosome-free peptidyl-tRNAs (with 1 or more amino acids incorporated), which drop off the ribosome during protein synthesis, or as a result of ribosome stalling. Functionally, catalyzes the release of premature peptidyl moieties from peptidyl-tRNA molecules trapped in stalled 50S ribosomal subunits, and thus maintains levels of free tRNAs and 50S ribosomes. In Streptococcus pneumoniae (strain P1031), this protein is Peptidyl-tRNA hydrolase.